Reading from the N-terminus, the 107-residue chain is Thioredoxin (107 aa).

The Thioredoxin domain occupies 2-107 (SEVLHINDAD…QLANFINQHI (106 aa)). The cysteines at positions 32 and 35 are disulfide-linked.

Belongs to the thioredoxin family.

In terms of biological role, participates in various redox reactions through the reversible oxidation of its active center dithiol to a disulfide and catalyzes dithiol-disulfide exchange reactions. The sequence is that of Thioredoxin (trxA) from Haemophilus influenzae (strain ATCC 51907 / DSM 11121 / KW20 / Rd).